The sequence spans 262 residues: Indole-3-glycerol phosphate synthase (262 aa).

This sequence belongs to the TrpC family.

It carries out the reaction 1-(2-carboxyphenylamino)-1-deoxy-D-ribulose 5-phosphate + H(+) = (1S,2R)-1-C-(indol-3-yl)glycerol 3-phosphate + CO2 + H2O. Its pathway is amino-acid biosynthesis; L-tryptophan biosynthesis; L-tryptophan from chorismate: step 4/5. This Aromatoleum aromaticum (strain DSM 19018 / LMG 30748 / EbN1) (Azoarcus sp. (strain EbN1)) protein is Indole-3-glycerol phosphate synthase.